The primary structure comprises 121 residues: Small ribosomal subunit protein bS6 (121 aa).

This sequence belongs to the bacterial ribosomal protein bS6 family.

In terms of biological role, binds together with bS18 to 16S ribosomal RNA. The protein is Small ribosomal subunit protein bS6 of Rickettsia canadensis (strain McKiel).